The primary structure comprises 430 residues: MSVRLWDKGGATDAQMLRYTSRDDWQLDQRLLAYDLRATIAHVRGLARIGVLSEAERDALVRELEVLSAQNEAGELRLTEDDEDGHSAIEAALVARIGDAGKKVHTGRSRNDQVLVATRLYERDALDELAENAAAGARALLDLARREAETPMPGYTHLQRAVPSSVGYWAASFVEGLADAIDVVRATRALVDRCPLGGAAGFGVNLPLDRVGVARELGFAGVALNPLASQTSRGIIEAQILAAAWQVMAVSRRLAWDLSLFAMSELAFIRLPEAFTTGSSIMPQKRNPDVVELMRAACSVVQGALAEVQSIVALPSGYHRDLQLTKGPTMRGLDEALATSRLLPRLVEGLAFDRERMARAITPECFATDRAVELAVEGVPFREAYRKVAAEIAALPAGDAAASLRARVSLGAPGNLALDDLARRLDRHAR.

It belongs to the lyase 1 family. Argininosuccinate lyase subfamily.

It localises to the cytoplasm. The enzyme catalyses 2-(N(omega)-L-arginino)succinate = fumarate + L-arginine. It participates in amino-acid biosynthesis; L-arginine biosynthesis; L-arginine from L-ornithine and carbamoyl phosphate: step 3/3. The polypeptide is Argininosuccinate lyase (Sorangium cellulosum (strain So ce56) (Polyangium cellulosum (strain So ce56))).